We begin with the raw amino-acid sequence, 300 residues long: Cell surface glycoprotein CD200 receptor 1-A (300 aa).

An N-terminal signal peptide occupies residues 1–24; that stretch reads MEIAGKAVCVFLLLAIIKLRRSEG. Positions 25 to 124 constitute an Ig-like V-type domain; the sequence is INRVSANLGH…GNFHRLYHLT (100 aa). At 25–213 the chain is on the extracellular side; the sequence is INRVSANLGH…SINCSSSYRD (189 aa). 2 disulfide bridges follow: cysteine 40–cysteine 108 and cysteine 143–cysteine 192. 6 N-linked (GlcNAc...) asparagine glycosylation sites follow: asparagine 45, asparagine 76, asparagine 105, asparagine 171, asparagine 200, and asparagine 206. One can recognise an Ig-like C2-type domain in the interval 122–206; sequence HLTVIVAPRM…ATLNETKSIN (85 aa). Residues 214-234 form a helical membrane-spanning segment; sequence LILCIAIILSFLIIITFMAVI. Over 235–300 the chain is Cytoplasmic; the sequence is YYLKLHGCRF…NLPQGQSPAT (66 aa).

The protein belongs to the CD200R family. Post-translationally, glycosylated. In terms of processing, phosphorylated. Highly expressed in macrophages, peripheral blood lymphocytes (PBL) and peripheral blood mononuclear cells (PBMC). Weakly expressed in bursa, thymus, spleen, liver and brain.

It is found in the membrane. Its subcellular location is the secreted. This chain is Cell surface glycoprotein CD200 receptor 1-A (CD200R1A), found in Gallus gallus (Chicken).